A 313-amino-acid chain; its full sequence is Homoserine O-acetyltransferase (313 aa).

Catalysis depends on C144, which acts as the Acyl-thioester intermediate. K165 and S194 together coordinate substrate. The active-site Proton acceptor is H236. E238 is an active-site residue. R250 lines the substrate pocket.

It belongs to the MetA family.

It is found in the cytoplasm. It catalyses the reaction L-homoserine + acetyl-CoA = O-acetyl-L-homoserine + CoA. The protein operates within amino-acid biosynthesis; L-methionine biosynthesis via de novo pathway; O-acetyl-L-homoserine from L-homoserine: step 1/1. Transfers an acetyl group from acetyl-CoA to L-homoserine, forming acetyl-L-homoserine. This chain is Homoserine O-acetyltransferase, found in Jannaschia sp. (strain CCS1).